The chain runs to 803 residues: Phosphoribosylformylglycinamidine synthase subunit PurL (803 aa).

Residue H65 is part of the active site. Residues Y68 and K107 each contribute to the ATP site. Residue E109 coordinates Mg(2+). Substrate contacts are provided by residues 110–113 and R132; that span reads SHNH. Residue H111 is the Proton acceptor of the active site. Residue D133 participates in Mg(2+) binding. Q256 contacts substrate. D284 serves as a coordination point for Mg(2+). Substrate is bound at residue 328–330; the sequence is ESQ. The ATP site is built by N537 and G574. N575 contacts Mg(2+). S577 is a substrate binding site.

This sequence belongs to the FGAMS family. As to quaternary structure, monomer. Part of the FGAM synthase complex composed of 1 PurL, 1 PurQ and 2 PurS subunits.

The protein localises to the cytoplasm. It catalyses the reaction N(2)-formyl-N(1)-(5-phospho-beta-D-ribosyl)glycinamide + L-glutamine + ATP + H2O = 2-formamido-N(1)-(5-O-phospho-beta-D-ribosyl)acetamidine + L-glutamate + ADP + phosphate + H(+). The protein operates within purine metabolism; IMP biosynthesis via de novo pathway; 5-amino-1-(5-phospho-D-ribosyl)imidazole from N(2)-formyl-N(1)-(5-phospho-D-ribosyl)glycinamide: step 1/2. Part of the phosphoribosylformylglycinamidine synthase complex involved in the purines biosynthetic pathway. Catalyzes the ATP-dependent conversion of formylglycinamide ribonucleotide (FGAR) and glutamine to yield formylglycinamidine ribonucleotide (FGAM) and glutamate. The FGAM synthase complex is composed of three subunits. PurQ produces an ammonia molecule by converting glutamine to glutamate. PurL transfers the ammonia molecule to FGAR to form FGAM in an ATP-dependent manner. PurS interacts with PurQ and PurL and is thought to assist in the transfer of the ammonia molecule from PurQ to PurL. The polypeptide is Phosphoribosylformylglycinamidine synthase subunit PurL (Prochlorococcus marinus (strain NATL1A)).